A 281-amino-acid chain; its full sequence is Pantothenate synthetase (281 aa).

ATP is bound at residue 30 to 37 (MGYLHEGH). The Proton donor role is filled by His-37. Gln-61 contacts (R)-pantoate. Gln-61 serves as a coordination point for beta-alanine. Residue 147–150 (GEKD) participates in ATP binding. Gln-153 serves as a coordination point for (R)-pantoate. Residues Ile-176 and 184–187 (KSSR) each bind ATP.

Belongs to the pantothenate synthetase family. Homodimer.

It is found in the cytoplasm. It carries out the reaction (R)-pantoate + beta-alanine + ATP = (R)-pantothenate + AMP + diphosphate + H(+). It functions in the pathway cofactor biosynthesis; (R)-pantothenate biosynthesis; (R)-pantothenate from (R)-pantoate and beta-alanine: step 1/1. Catalyzes the condensation of pantoate with beta-alanine in an ATP-dependent reaction via a pantoyl-adenylate intermediate. This Clostridium botulinum (strain 657 / Type Ba4) protein is Pantothenate synthetase.